Consider the following 146-residue polypeptide: UPF0260 protein Sama_1927 (146 aa).

The protein belongs to the UPF0260 family.

This Shewanella amazonensis (strain ATCC BAA-1098 / SB2B) protein is UPF0260 protein Sama_1927.